The chain runs to 1316 residues: Myosin-5 (1316 aa).

Over residues 1 to 12 (MAIVKRGGRTKT) the composition is skewed to basic residues. Residues 1-29 (MAIVKRGGRTKTKQQQVPAKSSGGGSSGG) form a disordered region. Positions 43-731 (VGVSDLTLLS…TLFALEDMRD (689 aa)) constitute a Myosin motor domain. 136–143 (GESGAGKT) contributes to the ATP binding site. S366 carries the phosphoserine modification. The interval 414–497 (SIGILDIYGF…PGLFAALNDS (84 aa)) is actin-binding. 2 consecutive IQ domains span residues 735–755 (HNMA…KEDA) and 756–781 (AKTI…YGNG). The TH1 domain occupies 789-981 (RRRMSMLGSR…TVSVKQGLPA (193 aa)). Disordered regions lie at residues 964-1154 (NGDH…PTLV) and 1209-1316 (DYLK…DDDW). 2 stretches are compositionally biased toward polar residues: residues 971-984 (GTVS…ASSK) and 1018-1030 (PRYN…ANSG). Low complexity predominate over residues 1042-1065 (QPQQYQPQQSQQQTPYPTQSSIPS). A compositionally biased stretch (polar residues) spans 1097–1106 (SPTQQRQTPA). Over residues 1117–1129 (ASTTIATTTSHTS) the composition is skewed to low complexity. Residues 1137 to 1153 (PAPPVKKTAPPPPPPTL) show a composition bias toward pro residues. Positions 1156-1216 (PKFPTYKAMF…PIDYLKECSP (61 aa)) constitute an SH3 domain. The span at 1223–1232 (APPPPPPPPA) shows a compositional bias: pro residues. Residues 1233–1268 (ATASAGANGASNPISTTTSTNTTTSSHTTNATSNGS) show a composition bias toward low complexity. Positions 1305–1316 (SDDEEEEDDDDW) are enriched in acidic residues.

It belongs to the TRAFAC class myosin-kinesin ATPase superfamily. Myosin family. In terms of processing, phosphorylation of the TEDS site (Ser-366) is required for the polarization of the actin cytoskeleton. Phosphorylation probably activates the myosin-I ATPase activity.

It is found in the cytoplasm. The protein resides in the cytoskeleton. The protein localises to the actin patch. Its function is as follows. Type-I myosin implicated in the organization of the actin cytoskeleton. Required for proper actin cytoskeleton polarization and for the internalization step in endocytosis. At the cell cortex, assembles in patch-like structures together with proteins from the actin-polymerizing machinery and promotes actin assembly. Functions as actin nucleation-promoting factor (NPF) for the Arp2/3 complex. Plays a role in chitin deposition in the cell wall, in determination of the budding pattern, and is required for hyphae formation. This is Myosin-5 (MYO5) from Candida albicans (strain SC5314 / ATCC MYA-2876) (Yeast).